Here is a 996-residue protein sequence, read N- to C-terminus: MGRPELGALRPLALLLLLLLQLQHLSAADPLPGGQGPVKECEEDQFRCRNERCIPLVWRCDEDNDCSDNSDEDDCPKRTCADSDFTCDNGHCIPERWKCDGEEECPDGSDESKATCSSEECPAEKLSCGPTSHKCVPASWRCDGEKDCEGGADEAGCPTLCAPHEFQCSNRSCLASVFVCDGDDDCGDGSDERGCSDPACPPREFRCGGGGTCIPERWVCDRQFDCEDRSDEAAELCGRAGQGTTATPAACAPTAQFTCRSGECIHLGWRCDGDRDCKDKSDEADCSPGPCRENEFQCGDGTCVLAIKRCNQERDCPDGSDEAGCLQESTCEGPRRFQCKSGECVDGGKVCDDQRDCRDWSDEPQKVCGLNECLHNNGGCSHICTDLKIGFECTCPAGFQLLDQKTCGDIDECQDPDACSQICVNYKGYFKCECHPGYEMDTLTKNCKAVAGKSPSLIFTNRHEVRRIDLVKRDYSRLIPMLKNVVALDVEVATNRIYWCDLSYRKIYSAHMDKASIPDEQVVLIDEQLHSPEGLAVDWVHKHIYWTDSGNKTISVATTDGRRRCTLFSRELSEPRAIAVDPLRGFMYWSDWGFQAKIEKAGLNGADRQTLVSDNIEWPNGITLDLLSQRLYWVDSKLHQLSSIDFNGGNRKMLIFSTDFLSHPFGVAVFEDKVFWTDLENEAIFSANRLNGLEIAILAENLNNPHDIVIFHELKQPKAADACDLSAQPNGGCEYLCLPAPQISSHSPKYTCACPDTMWLGPDMKRCYRAPQSTSTTTLASAMTRTVPATTRAPGTTIHDPTYQNHSTETPSQTAAAPHSVNVPRAPSTSPSTPSPATSNHSQHYGNEGSQMGSTVTAAVIGVIVPIVVIALLCMSGYLIWRNWKRKNTKSMNFDNPVYRKTTEEEEEDELHIGRTAQIGHVYPAAISNYDRPLWAEPCLGETRDLEDPAPALKELFVLPGEPRSQLHQLPKNPLSELPVVKCKRVALSLEDDGLP.

The first 28 residues, 1–28 (MGRPELGALRPLALLLLLLLQLQHLSAA), serve as a signal peptide directing secretion. Topologically, residues 29 to 858 (DPLPGGQGPV…GSQMGSTVTA (830 aa)) are extracellular. 8 consecutive LDL-receptor class A domains span residues 40–76 (ECEE…DDCP), 79–117 (TCAD…ATCS), 120–158 (ECPA…AGCP), 160–196 (LCAP…RGCS), 199–238 (ACPP…ELCG), 250–287 (ACAP…ADCS), 290–326 (PCRE…AGCL), and 330–369 (TCEG…KVCG). 30 disulfide bridges follow: C41/C53, C48/C66, C60/C75, C80/C92, C87/C105, C99/C116, C121/C135, C128/C148, C142/C157, C161/C173, C168/C186, C180/C195, C200/C213, C207/C226, C220/C237, C251/C264, C259/C277, C271/C286, C291/C303, C298/C316, C310/C325, C331/C344, C339/C357, C351/C368, C373/C384, C380/C393, C395/C407, C413/C423, C419/C432, and C434/C447. Residues W58, D61, D63, D65, D71, and E72 each coordinate Ca(2+). An N-linked (GlcNAc...) asparagine glycan is attached at N170. Positions 364–408 (PQKVCGLNECLHNNGGCSHICTDLKIGFECTCPAGFQLLDQKTCG) constitute an EGF-like 1 domain. The region spanning 409–448 (DIDECQDPDACSQICVNYKGYFKCECHPGYEMDTLTKNCK) is the EGF-like 2; calcium-binding domain. LDL-receptor class B repeat units follow at residues 495 to 541 (NRIY…DWVH), 542 to 584 (KHIY…DPLR), 585 to 628 (GFMY…DLLS), 629 to 671 (QRLY…AVFE), and 672 to 714 (DKVF…FHEL). The N-linked (GlcNAc...) asparagine glycan is linked to N551. The segment at 773–831 (STSTTTLASAMTRTVPATTRAPGTTIHDPTYQNHSTETPSQTAAAPHSVNVPRAPSTSP) is clustered O-linked oligosaccharides. Residues 778 to 851 (TLASAMTRTV…SQHYGNEGSQ (74 aa)) form a disordered region. Positions 802-815 (TYQNHSTETPSQTA) are enriched in polar residues. N-linked (GlcNAc...) asparagine glycosylation occurs at N805. Residues 824–839 (PRAPSTSPSTPSPATS) show a composition bias toward low complexity. N-linked (GlcNAc...) asparagine glycosylation occurs at N840. Over residues 840–851 (NHSQHYGNEGSQ) the composition is skewed to polar residues. Residues 859–881 (AVIGVIVPIVVIALLCMSGYLIW) traverse the membrane as a helical segment. Topologically, residues 882–996 (RNWKRKNTKS…ALSLEDDGLP (115 aa)) are cytoplasmic.

The protein belongs to the LDLR family. Homooligomer. Interacts with VLDLR. Reelin associates with two or more receptor molecules. Interacts with DAB1 and JNK-interacting proteins. Interacts with SNX17. Interacts with PCSK9. Interacts with MDK; this interaction is calcium dependent. Interacts with CLU. O-glycosylated. Some alternatively spliced isoforms lack the O-linked sugar domain. In terms of processing, undergoes sequential, furin and gamma-secretase dependent, proteolytic processing, resulting in the extracellular release of the entire ligand-binding domain as a soluble polypeptide and in the intracellular domain (ICD) release into the cytoplasm. The gamma-secretase-dependent proteolytical processing occurs after the bulk of the extracellular domain has been shed, in a furin-dependent manner, in alternatively spliced isoforms carrying the furin cleavage site. Hypoglycosylation (mainly hypo-O-glycosylation) leads to increased extracellular cleavage, which in turn results in accelerating release of the intracellular domain (ICD) by the gamma-secretase. The resulting receptor fragment is able to inhibit Reelin signaling and in particular the Reelin-induced DAB1 phosphorylation. Post-translationally, tyrosine phosphorylated upon apoE binding. Ubiquitinated by MYLIP leading to degradation. In terms of tissue distribution, expressed in neurons throughout the brain, with strong expression in pyramidal neurons of the hippocampus, granule cells of the dentate gyrus, cortical neurons and Purkinje cells of the cerebellum. Also expressed in the epithelium of the choroid plexus and of the blood vessels (apical expression), as well as in the epididymis.

The protein resides in the cell membrane. It is found in the secreted. In terms of biological role, cell surface receptor for Reelin (RELN) and apolipoprotein E (apoE)-containing ligands. LRP8 participates in transmitting the extracellular Reelin signal to intracellular signaling processes, by binding to DAB1 on its cytoplasmic tail. Reelin acts via both the VLDL receptor (VLDLR) and LRP8 to regulate DAB1 tyrosine phosphorylation and microtubule function in neurons. LRP8 has higher affinity for Reelin than VLDLR. LRP8 is thus a key component of the Reelin pathway which governs neuronal layering of the forebrain during embryonic brain development. Binds the endoplasmic reticulum resident receptor-associated protein (RAP). Binds dimers of beta 2-glycoprotein I and may be involved in the suppression of platelet aggregation in the vasculature. Highly expressed in the initial segment of the epididymis, where it affects the functional expression of clusterin and phospholipid hydroperoxide glutathione peroxidase (PHGPx), two proteins required for sperm maturation. May also function as an endocytic receptor. Not required for endocytic uptake of SEPP1 in the kidney which is mediated by LRP2. Together with its ligand, apolipoprotein E (apoE), may indirectly play a role in the suppression of the innate immune response by controlling the survival of myeloid-derived suppressor cells. The chain is Low-density lipoprotein receptor-related protein 8 (Lrp8) from Mus musculus (Mouse).